The chain runs to 348 residues: Serine/threonine-protein kinase SBK2 (348 aa).

Residues 1–25 (MPGKQSEEGPAEAGASEDSEEEGLG) are disordered. One can recognise a Protein kinase domain in the interval 62–330 (YEEVRPLGQG…IREHLGRPWR (269 aa)). ATP contacts are provided by residues 68-76 (LGQGCYGRV) and Lys-91. Catalysis depends on Asp-183, which acts as the Proton acceptor.

Belongs to the protein kinase superfamily. Ser/Thr protein kinase family. STKL subfamily.

The enzyme catalyses L-seryl-[protein] + ATP = O-phospho-L-seryl-[protein] + ADP + H(+). It carries out the reaction L-threonyl-[protein] + ATP = O-phospho-L-threonyl-[protein] + ADP + H(+). This is Serine/threonine-protein kinase SBK2 (SBK2) from Homo sapiens (Human).